Here is a 439-residue protein sequence, read N- to C-terminus: Glutamyl-tRNA reductase (439 aa).

Residues 48 to 51 (TCNR), Ser-107, 112 to 114 (EPQ), and Gln-118 contribute to the substrate site. Residue Cys-49 is the Nucleophile of the active site. An NADP(+)-binding site is contributed by 187-192 (GAGEMA).

Belongs to the glutamyl-tRNA reductase family. As to quaternary structure, homodimer.

The enzyme catalyses (S)-4-amino-5-oxopentanoate + tRNA(Glu) + NADP(+) = L-glutamyl-tRNA(Glu) + NADPH + H(+). The protein operates within porphyrin-containing compound metabolism; protoporphyrin-IX biosynthesis; 5-aminolevulinate from L-glutamyl-tRNA(Glu): step 1/2. Functionally, catalyzes the NADPH-dependent reduction of glutamyl-tRNA(Glu) to glutamate 1-semialdehyde (GSA). This Maridesulfovibrio salexigens (strain ATCC 14822 / DSM 2638 / NCIMB 8403 / VKM B-1763) (Desulfovibrio salexigens) protein is Glutamyl-tRNA reductase.